Here is a 227-residue protein sequence, read N- to C-terminus: 2-C-methyl-D-erythritol 4-phosphate cytidylyltransferase (227 aa).

It belongs to the IspD/TarI cytidylyltransferase family. IspD subfamily.

The catalysed reaction is 2-C-methyl-D-erythritol 4-phosphate + CTP + H(+) = 4-CDP-2-C-methyl-D-erythritol + diphosphate. It functions in the pathway isoprenoid biosynthesis; isopentenyl diphosphate biosynthesis via DXP pathway; isopentenyl diphosphate from 1-deoxy-D-xylulose 5-phosphate: step 2/6. Catalyzes the formation of 4-diphosphocytidyl-2-C-methyl-D-erythritol from CTP and 2-C-methyl-D-erythritol 4-phosphate (MEP). In Bordetella bronchiseptica (strain ATCC BAA-588 / NCTC 13252 / RB50) (Alcaligenes bronchisepticus), this protein is 2-C-methyl-D-erythritol 4-phosphate cytidylyltransferase.